The sequence spans 562 residues: Formate--tetrahydrofolate ligase (562 aa).

71–78 (TPAGEGKS) serves as a coordination point for ATP.

It belongs to the formate--tetrahydrofolate ligase family.

The catalysed reaction is (6S)-5,6,7,8-tetrahydrofolate + formate + ATP = (6R)-10-formyltetrahydrofolate + ADP + phosphate. Its pathway is one-carbon metabolism; tetrahydrofolate interconversion. In Bacillus cereus (strain ATCC 14579 / DSM 31 / CCUG 7414 / JCM 2152 / NBRC 15305 / NCIMB 9373 / NCTC 2599 / NRRL B-3711), this protein is Formate--tetrahydrofolate ligase.